The following is an 864-amino-acid chain: Protein translocase subunit SecA (864 aa).

Residues glutamine 87, 105–109 (GEGKT), and aspartate 512 contribute to the ATP site.

The protein belongs to the SecA family. As to quaternary structure, monomer and homodimer. Part of the essential Sec protein translocation apparatus which comprises SecA, SecYEG and auxiliary proteins SecDF-YajC and YidC.

Its subcellular location is the cell inner membrane. It is found in the cytoplasm. It catalyses the reaction ATP + H2O + cellular proteinSide 1 = ADP + phosphate + cellular proteinSide 2.. Functionally, part of the Sec protein translocase complex. Interacts with the SecYEG preprotein conducting channel. Has a central role in coupling the hydrolysis of ATP to the transfer of proteins into and across the cell membrane, serving as an ATP-driven molecular motor driving the stepwise translocation of polypeptide chains across the membrane. This Buchnera aphidicola subsp. Cinara cedri (strain Cc) protein is Protein translocase subunit SecA.